We begin with the raw amino-acid sequence, 345 residues long: High mobility group protein 20A (345 aa).

Disordered stretches follow at residues 1–130 (MEST…PFPE) and 166–206 (QKYQ…EKES). 2 stretches are compositionally biased toward polar residues: residues 22–38 (NNQP…SSQA) and 57–67 (LHQSGEQQLGN). Residues 80–94 (ARRGGWNKGRKRKRS) show a composition bias toward basic residues. Positions 101-169 (PKAPLTGYVR…RYTKELQKYQ (69 aa)) form a DNA-binding region, HMG box. A compositionally biased stretch (basic and acidic residues) spans 112–125 (MNERREQLRTERPD). The span at 167–178 (KYQNTDAYQTYS) shows a compositional bias: polar residues. Residues 179-189 (RKAKSRQKGRQ) are compositionally biased toward basic residues. A coiled-coil region spans residues 227–285 (SKAREAELRQLRKSNMEFEERNAALQKHVESMRSAVQRLEAELSQEHERNSLLQQHLQS).

It is found in the nucleus. Its function is as follows. Plays a role in neuronal differentiation. The sequence is that of High mobility group protein 20A (hmg20a) from Xenopus laevis (African clawed frog).